The primary structure comprises 400 residues: Endophilin-B2 (400 aa).

N-acetylmethionine is present on methionine 1. Positions 1–27 (MDFNMKKLASDAGIFFTRAVQFTEEKF) are membrane-binding amphipathic helix. Serine 10 bears the Phosphoserine mark. Residues 24–287 (EEKFGQAEKT…LGSSQGAIFP (264 aa)) enclose the BAR domain. Residues 205–234 (SASALWNDEVDKAEQELRVAQTEFDRQAEV) adopt a coiled-coil conformation. Positions 340-400 (SGTRKARVLY…VPVTYLELLS (61 aa)) constitute an SH3 domain. Serine 400 bears the Phosphoserine mark.

Belongs to the endophilin family. As to quaternary structure, homodimer, and heterodimer with SH3GLB1.

The protein resides in the cytoplasm. The protein is Endophilin-B2 (Sh3glb2) of Mus musculus (Mouse).